The following is a 260-amino-acid chain: Purine nucleoside phosphorylase PD_1754 (260 aa).

Residues H79, C120, and H137 each coordinate Zn(2+).

The protein belongs to the purine nucleoside phosphorylase YfiH/LACC1 family. In terms of assembly, homodimer. Cu(2+) serves as cofactor. Requires Zn(2+) as cofactor.

It carries out the reaction adenosine + phosphate = alpha-D-ribose 1-phosphate + adenine. The enzyme catalyses S-methyl-5'-thioadenosine + phosphate = 5-(methylsulfanyl)-alpha-D-ribose 1-phosphate + adenine. It catalyses the reaction inosine + phosphate = alpha-D-ribose 1-phosphate + hypoxanthine. The catalysed reaction is adenosine + H2O + H(+) = inosine + NH4(+). Functionally, purine nucleoside enzyme that catalyzes the phosphorolysis of adenosine and inosine nucleosides, yielding D-ribose 1-phosphate and the respective free bases, adenine and hypoxanthine. Also catalyzes the phosphorolysis of S-methyl-5'-thioadenosine into adenine and S-methyl-5-thio-alpha-D-ribose 1-phosphate. Also has adenosine deaminase activity. This is Purine nucleoside phosphorylase PD_1754 from Xylella fastidiosa (strain Temecula1 / ATCC 700964).